The primary structure comprises 238 residues: NAD(P)H-hydrate epimerase (238 aa).

A YjeF N-terminal domain is found at Ala11–Leu217. Asn61–Asp65 serves as a coordination point for (6S)-NADPHX. Asn62 and Asp123 together coordinate K(+). Residues Gly127–Ser133 and Asp156 contribute to the (6S)-NADPHX site. Ser159 is a binding site for K(+).

This sequence belongs to the NnrE/AIBP family. Requires K(+) as cofactor.

It is found in the cytoplasm. The protein localises to the mitochondrion. The catalysed reaction is (6R)-NADHX = (6S)-NADHX. It catalyses the reaction (6R)-NADPHX = (6S)-NADPHX. Functionally, catalyzes the epimerization of the S- and R-forms of NAD(P)HX, a damaged form of NAD(P)H that is a result of enzymatic or heat-dependent hydration. This is a prerequisite for the S-specific NAD(P)H-hydrate dehydratase to allow the repair of both epimers of NAD(P)HX. The protein is NAD(P)H-hydrate epimerase of Sclerotinia sclerotiorum (strain ATCC 18683 / 1980 / Ss-1) (White mold).